A 361-amino-acid chain; its full sequence is Endo-1,4-beta-xylanase 2 (361 aa).

The first 26 residues, 1-26, serve as a signal peptide directing secretion; it reads MHFSTITAALALLGLGAATPTDYSTS. Residues 46-354 enclose the GH10 domain; it reads IGTALTIRDD…KPAYSSVLKT (309 aa). Asn88 and Asn130 each carry an N-linked (GlcNAc...) asparagine glycan. Glu160 functions as the Proton donor in the catalytic mechanism. Residue Glu276 is the Nucleophile of the active site. A disulfide bridge links Cys304 with Cys310.

The protein belongs to the glycosyl hydrolase 10 (cellulase F) family.

Its subcellular location is the secreted. The enzyme catalyses Endohydrolysis of (1-&gt;4)-beta-D-xylosidic linkages in xylans.. It functions in the pathway glycan degradation; xylan degradation. In terms of biological role, endo-1,4-beta-xylanase involved in the hydrolysis of xylan, a major structural heterogeneous polysaccharide found in plant biomass representing the second most abundant polysaccharide in the biosphere, after cellulose. Hydrolyzes birch-wood xylan, with a similar activity toward oat-spelt xylan. Also shows weak activities toward pNP-beta-D-cellobioside and pNP-beta-D-xylopyranoside, but no detectable activity toward carboxymethyl cellulose and pNP-beta-L-arabinofuranoside.-. This chain is Endo-1,4-beta-xylanase 2 (xynII), found in Aureobasidium pullulans (Black yeast).